The chain runs to 310 residues: Methionyl-tRNA formyltransferase (310 aa).

109 to 112 contacts (6S)-5,6,7,8-tetrahydrofolate; the sequence is SLLP.

It belongs to the Fmt family.

The enzyme catalyses L-methionyl-tRNA(fMet) + (6R)-10-formyltetrahydrofolate = N-formyl-L-methionyl-tRNA(fMet) + (6S)-5,6,7,8-tetrahydrofolate + H(+). Functionally, attaches a formyl group to the free amino group of methionyl-tRNA(fMet). The formyl group appears to play a dual role in the initiator identity of N-formylmethionyl-tRNA by promoting its recognition by IF2 and preventing the misappropriation of this tRNA by the elongation apparatus. In Alkaliphilus oremlandii (strain OhILAs) (Clostridium oremlandii (strain OhILAs)), this protein is Methionyl-tRNA formyltransferase.